The chain runs to 1715 residues: Ubiquitin carboxyl-terminal hydrolase 32 (1715 aa).

2 consecutive EF-hand domains span residues 161-196 (IPKN…ACRG) and 197-232 (PGVE…LLLV). Aspartate 174, asparagine 176, aspartate 178, histidine 180, glutamate 185, aspartate 210, aspartate 212, aspartate 214, and glutamate 221 together coordinate Ca(2+). The region spanning 314 to 492 (QCKHMENDIV…DNLPLPRQVI (179 aa)) is the DUSP domain. The disordered stretch occupies residues 393–429 (QHDSYSLGSGTGSASGSGSASSGISAGRHCGPVRPGP). A compositionally biased stretch (low complexity) spans 408–419 (GSGSASSGISAG). The region spanning 677–1675 (TGLHNLGNTC…AAYLLFYERK (999 aa)) is the USP domain. Cysteine 686 functions as the Nucleophile in the catalytic mechanism. Polar residues-rich tracts occupy residues 1103–1126 (TESN…SSLT) and 1150–1164 (YRTS…STGH). Disordered regions lie at residues 1103-1213 (TESN…PHKA) and 1536-1569 (DEID…GNIL). The segment covering 1171–1180 (DVDEQAEEGN) has biased composition (acidic residues). The span at 1188–1209 (DQITTSQPETSSGVYSRRSSQP) shows a compositional bias: polar residues. Basic and acidic residues predominate over residues 1540–1549 (APSKEVKEEL). Positions 1550–1559 (PNQTGSTKAT) are enriched in polar residues. Residue histidine 1633 is the Proton acceptor of the active site.

Belongs to the peptidase C19 family. USP20/USP33 subfamily.

The enzyme catalyses Thiol-dependent hydrolysis of ester, thioester, amide, peptide and isopeptide bonds formed by the C-terminal Gly of ubiquitin (a 76-residue protein attached to proteins as an intracellular targeting signal).. In terms of biological role, deubiquitinating enzyme that acts as an inhibitor of mitophagy probably by counteracting the action of park. Possibly functions by hydrolyzing ubiquitin attached by park on target proteins, thereby reducing park's ability to drive mitophagy. In Drosophila melanogaster (Fruit fly), this protein is Ubiquitin carboxyl-terminal hydrolase 32.